The primary structure comprises 97 residues: Large ribosomal subunit protein bL27 (97 aa).

Residues 1 to 12 (MLNLNLANLQFM) constitute a propeptide that is removed on maturation. The tract at residues 15–37 (KKGGGSTSNGRDSQAKRLGAKAA) is disordered.

The protein belongs to the bacterial ribosomal protein bL27 family. Post-translationally, the N-terminus is cleaved by ribosomal processing cysteine protease Prp.

This is Large ribosomal subunit protein bL27 from Streptococcus suis (strain 98HAH33).